The sequence spans 248 residues: Triosephosphate isomerase (248 aa).

2 residues coordinate substrate: asparagine 12 and lysine 14. At lysine 14 the chain carries N6-acetyllysine. Tyrosine 68 carries the post-translational modification 3'-nitrotyrosine. The active-site Electrophile is histidine 96. At serine 106 the chain carries Phosphoserine. Lysine 142 participates in a covalent cross-link: Glycyl lysine isopeptide (Lys-Gly) (interchain with G-Cter in SUMO1). Lysine 149 is subject to N6-succinyllysine. N6-acetyllysine; alternate is present on lysine 156. Position 156 is an N6-succinyllysine; alternate (lysine 156). Glutamate 166 functions as the Proton acceptor in the catalytic mechanism. Threonine 173 carries the post-translational modification Phosphothreonine. Residue lysine 194 is modified to N6-acetyllysine; alternate. The residue at position 194 (lysine 194) is an N6-succinyllysine; alternate. Lysine 194 is modified (N6-methyllysine; alternate). 3'-nitrotyrosine is present on tyrosine 209. Serine 212 is modified (phosphoserine). Threonine 214 is modified (phosphothreonine). Residue serine 223 is modified to Phosphoserine. Lysine 238 is subject to N6-acetyllysine.

Belongs to the triosephosphate isomerase family. In terms of assembly, homodimer.

It is found in the cytoplasm. It carries out the reaction dihydroxyacetone phosphate = methylglyoxal + phosphate. It catalyses the reaction D-glyceraldehyde 3-phosphate = dihydroxyacetone phosphate. It participates in carbohydrate degradation; glycolysis; D-glyceraldehyde 3-phosphate from glycerone phosphate: step 1/1. It functions in the pathway carbohydrate biosynthesis; gluconeogenesis. Triosephosphate isomerase is an extremely efficient metabolic enzyme that catalyzes the interconversion between dihydroxyacetone phosphate (DHAP) and D-glyceraldehyde-3-phosphate (G3P) in glycolysis and gluconeogenesis. Its function is as follows. It is also responsible for the non-negligible production of methylglyoxal a reactive cytotoxic side-product that modifies and can alter proteins, DNA and lipids. This chain is Triosephosphate isomerase (TPI1), found in Sus scrofa (Pig).